Consider the following 122-residue polypeptide: Cofilin/actin-depolymerizing factor homolog 1 (122 aa).

One can recognise an ADF-H domain in the interval 4–122; that stretch reads GIRVNDNCVT…ESAQDVADLK (119 aa).

This sequence belongs to the actin-binding proteins ADF family. In terms of assembly, interacts with monomeric actin, does not bind to actin polymers.

Its subcellular location is the cytoplasm. The protein resides in the cytoskeleton. Functionally, not involved in actin polymerisation, instead functions to stimulate nucleotide exchange on monomeric actin and influence turnover of the small amount of cytosolic actin microfilaments. Essential for erythrocytic schizogony. In Plasmodium falciparum (isolate 3D7), this protein is Cofilin/actin-depolymerizing factor homolog 1.